A 586-amino-acid polypeptide reads, in one-letter code: GRB2-associated-binding protein 3 (586 aa).

The PH domain occupies 5–117; the sequence is DAVCTGWLVK…WVHSISQVCN (113 aa). Disordered stretches follow at residues 149–171 and 281–335; these read AHAA…TEET and SSTI…KKPE. Residues 283–292 show a composition bias toward polar residues; that stretch reads TIQVDKNQGS. The segment covering 316–326 has biased composition (basic and acidic residues); the sequence is HLSERRQEEWS. Residue serine 344 is modified to Phosphoserine. The interval 401–453 is disordered; it reads GASGLGPHCSPDDYIPMNSGSISSPLPELPANLEPPPVNRDLKPQRKSRPPPL. Serine 482 bears the Phosphoserine mark.

Belongs to the GAB family. In terms of assembly, interacts with PIK3R/p85, SHP2 and GRAP2/MONA. May interact with Grb2. Post-translationally, phosphorylated on tyrosine residue(s) after macrophage colony-stimulating factor (M-CSF) receptor stimulation.

In Homo sapiens (Human), this protein is GRB2-associated-binding protein 3 (GAB3).